Consider the following 47-residue polypeptide: PhoP/PhoQ regulator MgrB (47 aa).

Residues 6–26 (WVLLIVIIAGCLLLWTQMLNV) form a helical membrane-spanning segment.

The protein belongs to the MgrB family. May form homooligomers. Probably interacts with the periplasmic domain of PhoQ.

The protein resides in the cell inner membrane. Its function is as follows. PhoP-regulated transcription is redox-sensitive, being activated when the periplasm becomes more reducing. MgrB acts between DsbA/DsbB and PhoP/PhoQ in this pathway. Represses PhoP/PhoQ signaling, possibly by binding to the periplasmic domain of PhoQ, altering its activity and that of downstream effector PhoP. This chain is PhoP/PhoQ regulator MgrB, found in Klebsiella pneumoniae (strain 342).